Reading from the N-terminus, the 68-residue chain is Small integral membrane protein 10-like protein 1 (68 aa).

Positions 1–21 are disordered; that stretch reads MAPAAAPSSLAVRASSPAATP.

The chain is Small integral membrane protein 10-like protein 1 from Homo sapiens (Human).